Consider the following 294-residue polypeptide: Metallophosphoesterase MPPED2 (294 aa).

Positions 65, 67, 86, 117, and 213 each coordinate Mn(2+). Asn117–His118 contacts GMP. Residues Lys225–Glu226 and Gly252–Glu255 contribute to the GMP site. His254 serves as a coordination point for Mn(2+).

The protein belongs to the UPF0046 family. As to quaternary structure, homodimer. Mn(2+) serves as cofactor. The cofactor is Co(2+). In terms of tissue distribution, expressed predominantly in fetal brain.

With respect to regulation, inhibited by nmolar levels of AMP and GMP. Displays low metallophosphoesterase activity (in vitro). May play a role in the development of the nervous system. The protein is Metallophosphoesterase MPPED2 (MPPED2) of Homo sapiens (Human).